We begin with the raw amino-acid sequence, 345 residues long: Methionine import ATP-binding protein MetN (345 aa).

Residues 2 to 241 (IKLKNISKIF…PKTELAQEFI (240 aa)) form the ABC transporter domain. Position 38-45 (38-45 (GASGAGKS)) interacts with ATP.

Belongs to the ABC transporter superfamily. Methionine importer (TC 3.A.1.24) family. As to quaternary structure, the complex is composed of two ATP-binding proteins (MetN), two transmembrane proteins (MetI) and a solute-binding protein (MetQ).

The protein resides in the cell inner membrane. It catalyses the reaction L-methionine(out) + ATP + H2O = L-methionine(in) + ADP + phosphate + H(+). The catalysed reaction is D-methionine(out) + ATP + H2O = D-methionine(in) + ADP + phosphate + H(+). Part of the ABC transporter complex MetNIQ involved in methionine import. Responsible for energy coupling to the transport system. The sequence is that of Methionine import ATP-binding protein MetN from Mannheimia succiniciproducens (strain KCTC 0769BP / MBEL55E).